The sequence spans 137 residues: 6,7-dimethyl-8-ribityllumazine synthase (137 aa).

5-amino-6-(D-ribitylamino)uracil is bound by residues Phe11, 43-45 (SFD), and 67-69 (CVI). 72-73 (DT) is a binding site for (2S)-2-hydroxy-3-oxobutyl phosphate. His75 functions as the Proton donor in the catalytic mechanism. Leu100 is a 5-amino-6-(D-ribitylamino)uracil binding site. Position 115 (Arg115) interacts with (2S)-2-hydroxy-3-oxobutyl phosphate.

This sequence belongs to the DMRL synthase family. As to quaternary structure, forms an icosahedral capsid composed of 60 subunits, arranged as a dodecamer of pentamers.

It catalyses the reaction (2S)-2-hydroxy-3-oxobutyl phosphate + 5-amino-6-(D-ribitylamino)uracil = 6,7-dimethyl-8-(1-D-ribityl)lumazine + phosphate + 2 H2O + H(+). The protein operates within cofactor biosynthesis; riboflavin biosynthesis; riboflavin from 2-hydroxy-3-oxobutyl phosphate and 5-amino-6-(D-ribitylamino)uracil: step 1/2. In terms of biological role, catalyzes the formation of 6,7-dimethyl-8-ribityllumazine by condensation of 5-amino-6-(D-ribitylamino)uracil with 3,4-dihydroxy-2-butanone 4-phosphate. This is the penultimate step in the biosynthesis of riboflavin. The polypeptide is 6,7-dimethyl-8-ribityllumazine synthase (Methanococcus maripaludis (strain DSM 14266 / JCM 13030 / NBRC 101832 / S2 / LL)).